Here is a 115-residue protein sequence, read N- to C-terminus: Large ribosomal subunit protein bL20c (115 aa).

Belongs to the bacterial ribosomal protein bL20 family.

It is found in the plastid. Its subcellular location is the chloroplast. In terms of biological role, binds directly to 23S ribosomal RNA and is necessary for the in vitro assembly process of the 50S ribosomal subunit. It is not involved in the protein synthesizing functions of that subunit. The polypeptide is Large ribosomal subunit protein bL20c (Pyropia yezoensis (Susabi-nori)).